We begin with the raw amino-acid sequence, 256 residues long: 5'-nucleotidase SurE (256 aa).

Asp8, Asp9, Ser40, and Asn92 together coordinate a divalent metal cation.

This sequence belongs to the SurE nucleotidase family. The cofactor is a divalent metal cation.

The protein localises to the cytoplasm. The catalysed reaction is a ribonucleoside 5'-phosphate + H2O = a ribonucleoside + phosphate. Its function is as follows. Nucleotidase that shows phosphatase activity on nucleoside 5'-monophosphates. This is 5'-nucleotidase SurE from Sinorhizobium medicae (strain WSM419) (Ensifer medicae).